A 193-amino-acid chain; its full sequence is C-type lectin domain family 3 member A homolog (193 aa).

Residues 1–24 (MAQAGLLIWLFFTILLLDLTCTQS) form the signal peptide. 3 disulfides stabilise this stretch: Cys66-Cys76, Cys93-Cys188, and Cys164-Cys180. Residues 72–189 (IHKKCYLSFE…CRSLKKYICE (118 aa)) form the C-type lectin domain.

The protein resides in the secreted. This is C-type lectin domain family 3 member A homolog (clec3a) from Xenopus laevis (African clawed frog).